We begin with the raw amino-acid sequence, 105 residues long: Imizoquin biosynthesis cluster protein I (105 aa).

Polar residues predominate over residues 1–15 (MSSGEPTTMTPSPSE). The tract at residues 1 to 43 (MSSGEPTTMTPSPSERTPLLSNGSGGAADDGGTTVTISKPNDG) is disordered.

Its pathway is secondary metabolite biosynthesis. Part of the gene cluster that mediates the biosynthesis of imizoquins A to D, tripeptide-derived alkaloids that serve a protective role against oxidative stress that are essential for normal germination. ImqB is a canonical three-module NRPS that assembles the tripeptide backbone of the imizoquins via condensation of Trp, Tyr, and Leu-derived precursors. N-methylation by imqF and phenol oxidation by imqC, followed by cyclization via the FAD-dependent oxidase imqH carry out the three-step transformation of L-tyrosine into tetrahydroisoquinoline. Importantly, this sequence requires the presence of a free amine in the tyrosine moiety, indicating that isoquinoline formation occurs prior to peptide bond formation. The imidazolidin-4-one ring of imizoquins could form following additional oxidation of the methyl-derived bridgehead carbon by imqH. Lastly, O-methylation by imqG and leucine hydroxylation by imqE complete biosynthesis of the imizoquins. The protein is Imizoquin biosynthesis cluster protein I of Aspergillus flavus (strain ATCC 200026 / FGSC A1120 / IAM 13836 / NRRL 3357 / JCM 12722 / SRRC 167).